A 216-amino-acid polypeptide reads, in one-letter code: Kynurenine formamidase (216 aa).

Tryptophan 24 serves as a coordination point for substrate. The Zn(2+) site is built by histidine 54, histidine 58, and aspartate 60. Histidine 64 (proton donor/acceptor) is an active-site residue. Residues histidine 164 and glutamate 176 each coordinate Zn(2+).

The protein belongs to the Cyclase 1 superfamily. KynB family. Homodimer. Requires Zn(2+) as cofactor.

The enzyme catalyses N-formyl-L-kynurenine + H2O = L-kynurenine + formate + H(+). Its pathway is amino-acid degradation; L-tryptophan degradation via kynurenine pathway; L-kynurenine from L-tryptophan: step 2/2. Its function is as follows. Catalyzes the hydrolysis of N-formyl-L-kynurenine to L-kynurenine, the second step in the kynurenine pathway of tryptophan degradation. The protein is Kynurenine formamidase of Erythrobacter litoralis (strain HTCC2594).